The primary structure comprises 420 residues: Phospholipase A1-II 3 (420 aa).

Positions 1–21 (MCCFLLVSVLLATTLTDVASA) are cleaved as a signal peptide. A glycan (N-linked (GlcNAc...) asparagine) is linked at N231. The Acyl-ester intermediate role is filled by S240. S240 (charge relay system) is an active-site residue. N294 carries an N-linked (GlcNAc...) asparagine glycan. Catalysis depends on charge relay system residues D305 and H343. Residues 367–388 (VVDRDLALVNKEVDALRDEYQV) are a coiled coil. Residue N403 is glycosylated (N-linked (GlcNAc...) asparagine).

The protein belongs to the AB hydrolase superfamily. Lipase family.

The protein resides in the secreted. Acylhydrolase that catalyzes the hydrolysis of phospholipids at the sn-1 position. The sequence is that of Phospholipase A1-II 3 from Oryza sativa subsp. japonica (Rice).